A 102-amino-acid chain; its full sequence is MIHKLTSEERKTRLEGLPHWTAVPGRDAIQRSLRFADFNEAFGFMTRIAIKAQEMNHHPEWFNVYNRVDITLSTHDAHGLTERDIALAQFIDHVCAHTEPAA.

It belongs to the pterin-4-alpha-carbinolamine dehydratase family.

The enzyme catalyses (4aS,6R)-4a-hydroxy-L-erythro-5,6,7,8-tetrahydrobiopterin = (6R)-L-erythro-6,7-dihydrobiopterin + H2O. The protein is Putative pterin-4-alpha-carbinolamine dehydratase of Burkholderia ambifaria (strain MC40-6).